The following is a 96-amino-acid chain: Integration host factor subunit beta (96 aa).

The protein belongs to the bacterial histone-like protein family. Heterodimer of an alpha and a beta chain.

Functionally, this protein is one of the two subunits of integration host factor, a specific DNA-binding protein that functions in genetic recombination as well as in transcriptional and translational control. This chain is Integration host factor subunit beta, found in Caulobacter vibrioides (strain ATCC 19089 / CIP 103742 / CB 15) (Caulobacter crescentus).